Consider the following 326-residue polypeptide: Mitochondrial glycine transporter (326 aa).

3 Solcar repeats span residues 45-134 (HPVI…SKQY), 141-225 (PTAL…TRAT), and 237-321 (LMPL…MMAK). Helical transmembrane passes span 51 to 76 (FLCG…TRLQ), 109 to 135 (GMSP…KQYF), 147 to 172 (VILG…TRYE), 200 to 223 (GLTA…SQTR), 241 to 267 (VNFS…KTHM), and 296 to 314 (GSVP…AWTV).

This sequence belongs to the mitochondrial carrier (TC 2.A.29) family. SLC25A38 subfamily.

It localises to the mitochondrion inner membrane. It catalyses the reaction glycine(in) = glycine(out). In terms of biological role, mitochondrial glycine transporter that imports glycine into the mitochondrial matrix. Plays an important role in providing glycine for the first enzymatic step in heme biosynthesis, the condensation of glycine with succinyl-CoA to produce 5-aminolevulinate (ALA) in the mitochondrial matrix. Required during erythropoiesis. Functionally, plays a role as pro-apoptotic protein that induces caspase-dependent apoptosis. This Rattus norvegicus (Rat) protein is Mitochondrial glycine transporter.